A 438-amino-acid polypeptide reads, in one-letter code: Indole diterpene prenyltransferase paxD (438 aa).

Residue 80–81 coordinates L-tryptophan; sequence FM. Residues Arg102, Lys190, Arg264, Lys266, Tyr268, Tyr349, and Tyr418 each coordinate substrate.

Belongs to the tryptophan dimethylallyltransferase family.

It functions in the pathway secondary metabolite biosynthesis. In terms of biological role, indole diterpene prenyltransferase; part of the gene cluster that mediates the biosynthesis of paxilline, a mycotoxin that acts as an inhibitor of mammalian maxi-K channels. PaxG, the geranylgeranyl diphosphate (GGPP) synthase is proposed to catalyze the first step in paxilline biosynthesis. Condensation of indole-3-glycerol phosphate with GGPP by paxC then forms 3-geranylgeranylindole (3-GGI), followed by epoxidation and cyclization of this intermediate (by paxM and paxB) to form paspaline. Paspaline is subsequently converted to 13-desoxypaxilline by paxP, the latter being then converted to paxilline by paxQ. Finally paxilline can be mono- and di-prenylated by paxD. The chain is Indole diterpene prenyltransferase paxD from Penicillium paxilli.